Consider the following 378-residue polypeptide: Chaperone protein DnaJ (378 aa).

In terms of domain architecture, J spans 3-67 (DYYDLLGVSK…QTRGRYDQFG (65 aa)). The CR-type zinc-finger motif lies at 133–215 (GQEREIKIPH…CAGQGVRQVR (83 aa)). Residues cysteine 146, cysteine 149, cysteine 163, cysteine 166, cysteine 189, cysteine 192, cysteine 203, and cysteine 206 each contribute to the Zn(2+) site. CXXCXGXG motif repeat units lie at residues 146 to 153 (CDTCNGTG), 163 to 170 (CSTCGGVG), 189 to 196 (CPSCEGTG), and 203 to 210 (CPACAGQG).

This sequence belongs to the DnaJ family. Homodimer. The cofactor is Zn(2+).

Its subcellular location is the cytoplasm. In terms of biological role, participates actively in the response to hyperosmotic and heat shock by preventing the aggregation of stress-denatured proteins and by disaggregating proteins, also in an autonomous, DnaK-independent fashion. Unfolded proteins bind initially to DnaJ; upon interaction with the DnaJ-bound protein, DnaK hydrolyzes its bound ATP, resulting in the formation of a stable complex. GrpE releases ADP from DnaK; ATP binding to DnaK triggers the release of the substrate protein, thus completing the reaction cycle. Several rounds of ATP-dependent interactions between DnaJ, DnaK and GrpE are required for fully efficient folding. Also involved, together with DnaK and GrpE, in the DNA replication of plasmids through activation of initiation proteins. In Prochlorococcus marinus (strain MIT 9313), this protein is Chaperone protein DnaJ.